A 235-amino-acid polypeptide reads, in one-letter code: Serine protease SplA (235 aa).

Residues M1–A35 form the signal peptide. Residues H74, D113, and S189 each act as charge relay system in the active site.

This sequence belongs to the peptidase S1B family.

The protein resides in the secreted. The chain is Serine protease SplA (splA) from Staphylococcus aureus (strain USA300).